Consider the following 154-residue polypeptide: Protein FasC (154 aa).

The protein belongs to the periplasmic pilus chaperone family.

Could be required for the biogenesis of a putative fimbria. In Escherichia coli, this protein is Protein FasC (fasC).